We begin with the raw amino-acid sequence, 983 residues long: UPF0182 protein CMM_1204 (983 aa).

The next 7 membrane-spanning stretches (helical) occupy residues 16-36 (LAIT…FAGF), 56-76 (WGAG…PVFV), 108-128 (LAMF…ASSG), 161-181 (FYHA…LGVL), 205-225 (IQIA…IWLD), 255-275 (AILA…AVIG), and 281-301 (IIGT…YPAI). The span at 699 to 714 (QDLWTTPNDPTATTEA) shows a compositional bias: polar residues. 2 disordered regions span residues 699–718 (QDLW…GTPA) and 884–936 (DSGA…AQDV). Over residues 902 to 918 (GGTGDGATDGATDGGTG) the composition is skewed to gly residues. The segment covering 919–933 (STPTPAPTTSPSAPA) has biased composition (low complexity).

Belongs to the UPF0182 family.

The protein resides in the cell membrane. This is UPF0182 protein CMM_1204 from Clavibacter michiganensis subsp. michiganensis (strain NCPPB 382).